We begin with the raw amino-acid sequence, 1295 residues long: Phosphoribosylformylglycinamidine synthase (1295 aa).

A disordered region spans residues 302–327; sequence SPWPGASTGSGGEIRDEGATGRGAKP. ATP-binding positions include 306-317 and Ala677; that span reads GASTGSGGEIRD. Residues Asp678, Glu717, Asn721, and Asp884 each contribute to the Mg(2+) site. Ser886 provides a ligand contact to ATP. In terms of domain architecture, Glutamine amidotransferase type-1 spans 1042–1295; that stretch reads VAVLREQGVN…IFRNARKQLG (254 aa). The active-site Nucleophile is the Cys1135. Active-site residues include His1260 and Glu1262.

It in the N-terminal section; belongs to the FGAMS family. As to quaternary structure, monomer.

The protein resides in the cytoplasm. It catalyses the reaction N(2)-formyl-N(1)-(5-phospho-beta-D-ribosyl)glycinamide + L-glutamine + ATP + H2O = 2-formamido-N(1)-(5-O-phospho-beta-D-ribosyl)acetamidine + L-glutamate + ADP + phosphate + H(+). The protein operates within purine metabolism; IMP biosynthesis via de novo pathway; 5-amino-1-(5-phospho-D-ribosyl)imidazole from N(2)-formyl-N(1)-(5-phospho-D-ribosyl)glycinamide: step 1/2. Phosphoribosylformylglycinamidine synthase involved in the purines biosynthetic pathway. Catalyzes the ATP-dependent conversion of formylglycinamide ribonucleotide (FGAR) and glutamine to yield formylglycinamidine ribonucleotide (FGAM) and glutamate. The protein is Phosphoribosylformylglycinamidine synthase of Photorhabdus laumondii subsp. laumondii (strain DSM 15139 / CIP 105565 / TT01) (Photorhabdus luminescens subsp. laumondii).